A 251-amino-acid chain; its full sequence is MLAFLFYGLLLAACGSVTMSNPGESSFDLADRLDPVEKIDRLDLVEKIGDTHAKVLEIWMELGRRREVDAAEMHAICRVQPSATLPPDQPQITGLVLFRQLGPGSRLEAYFSLEGFPAEQNASNRAIHVHEFGDLSQGCDSTGPHYNPMEVPHPQHPGDFGNFVVRNGQLWRHRVGLTASLAGPHAILGRSVVVHAGEDDLGKGGNQASLQNGNAGRRLACCVVGTSSSAAWESQTKERKKRRRESECKTT.

An N-terminal signal peptide occupies residues 1-15; that stretch reads MLAFLFYGLLLAACG. A propeptide spanning residues 16–24 is cleaved from the precursor; the sequence is SVTMSNPGE. 2 cysteine pairs are disulfide-bonded: Cys77/Cys222 and Cys139/Cys221. Residue Asn121 is glycosylated (N-linked (GlcNAc...) asparagine). The Cu cation site is built by His128, His130, and His145. Zn(2+) contacts are provided by His145, His153, His156, and Asp159. Residue His195 coordinates Cu cation. Residues 230–251 are disordered; sequence AAWESQTKERKKRRRESECKTT.

This sequence belongs to the Cu-Zn superoxide dismutase family. As to quaternary structure, homotetramer. Directly interacts with ATP7A/MNK; this interaction is copper-dependent and is required for SOD3 activity. Requires Cu cation as cofactor. It depends on Zn(2+) as a cofactor.

The protein localises to the secreted. Its subcellular location is the extracellular space. It is found in the golgi apparatus. It localises to the trans-Golgi network. The catalysed reaction is 2 superoxide + 2 H(+) = H2O2 + O2. Protect the extracellular space from toxic effect of reactive oxygen intermediates by converting superoxide radicals into hydrogen peroxide and oxygen. In Mus musculus (Mouse), this protein is Extracellular superoxide dismutase [Cu-Zn] (Sod3).